The following is a 709-amino-acid chain: ATP-dependent RNA helicase dbp7 (709 aa).

A disordered region spans residues 13 to 90; that stretch reads DNAQSRKPEA…KPAHELKGNK (78 aa). The segment covering 16–34 has biased composition (basic and acidic residues); sequence QSRKPEALKSSRRWTDRAR. Polar residues predominate over residues 44-65; that stretch reads NESSKSTVKRNSGTNGASTDYK. Over residues 66 to 90 the composition is skewed to basic and acidic residues; sequence NSQKEKVINPVFDPRKPAHELKGNK. A Q motif motif is present at residues 138–167; the sequence is TNFAGVQLDTQLADHLNNKMNISAPTAIQS. The 195-residue stretch at 172–366 folds into the Helicase ATP-binding domain; it reads ALLNTDDKDA…DSALKDALYL (195 aa). Residue 185-192 coordinates ATP; sequence AQTGSGKT. Positions 301-304 match the DEAD box motif; sequence DEGD. The Helicase C-terminal domain maps to 404 to 580; sequence LLRSHVRSYK…EQPNGPSGLL (177 aa). A disordered region spans residues 662 to 690; that stretch reads GKISGANSSKPRKQGGSVDKGKSKSSKDI.

Belongs to the DEAD box helicase family. DDX31/DBP7 subfamily.

The protein localises to the nucleus. It localises to the nucleolus. It catalyses the reaction ATP + H2O = ADP + phosphate + H(+). In terms of biological role, ATP-binding RNA helicase involved in the biogenesis of 60S ribosomal subunits and is required for the normal formation of 25S and 5.8S rRNAs. The protein is ATP-dependent RNA helicase dbp7 (dbp7) of Schizosaccharomyces pombe (strain 972 / ATCC 24843) (Fission yeast).